We begin with the raw amino-acid sequence, 925 residues long: Probable dipeptidyl-aminopeptidase B (925 aa).

Residues 1 to 104 (MTPYRDVPPV…RHAQKKGPGM (104 aa)) are disordered. Residues 1–110 (MTPYRDVPPV…GPGMDRGMRR (110 aa)) are Cytoplasmic-facing. Over residues 31 to 40 (ESGSSVSTTS) the composition is skewed to low complexity. Over residues 55-72 (LSEKQPRGDDNEDALKDE) the composition is skewed to basic and acidic residues. A helical; Signal-anchor for type II membrane protein membrane pass occupies residues 111–131 (ALLIAAGLLVSAWVAGLFVYI). The Vacuolar segment spans residues 132-925 (ATKSYKPASA…PKPNGKRRAA (794 aa)). A glycan (N-linked (GlcNAc...) asparagine) is linked at Asn369. Residue Ser773 is the Charge relay system of the active site. Asn832 carries an N-linked (GlcNAc...) asparagine glycan. Residues Asp850 and His883 each act as charge relay system in the active site.

It belongs to the peptidase S9B family.

The protein localises to the vacuole membrane. It catalyses the reaction Release of an N-terminal dipeptide, Xaa-Yaa-|-Zaa-, from a polypeptide, preferentially when Yaa is Pro, provided Zaa is neither Pro nor hydroxyproline.. Type IV dipeptidyl-peptidase which removes N-terminal dipeptides sequentially from polypeptides having unsubstituted N-termini provided that the penultimate residue is proline. The chain is Probable dipeptidyl-aminopeptidase B (DAPB) from Chaetomium globosum (strain ATCC 6205 / CBS 148.51 / DSM 1962 / NBRC 6347 / NRRL 1970) (Soil fungus).